Consider the following 793-residue polypeptide: Copalyl diphosphate synthase CPS1, chloroplastic (793 aa).

A chloroplast-targeting transit peptide spans 1 to 59; it reads MASLSSTILSRSPAARRRITPASAKLHRPECFATSAWMGSSSKNLSLSYQLNHKKISVA. Lys238 provides a ligand contact to substrate. Positions 370 and 372 each coordinate Mg(2+). The DXDD motif motif lies at 370–373; sequence DIDD. Lys457 provides a ligand contact to substrate.

It belongs to the terpene synthase family. Mg(2+) is required as a cofactor.

It localises to the plastid. It is found in the chloroplast. The catalysed reaction is (2E,6E,10E)-geranylgeranyl diphosphate = (+)-copalyl diphosphate. The protein operates within secondary metabolite biosynthesis; terpenoid biosynthesis. Its function is as follows. Involved in tanshinone biosynthesis in hairy roots. Catalyzes the conversion of geranylgeranyl diphosphate (GGPP) to copalyl diphosphate (CPP). The polypeptide is Copalyl diphosphate synthase CPS1, chloroplastic (Salvia miltiorrhiza (Chinese sage)).